The primary structure comprises 1158 residues: Transient receptor potential cation channel subfamily M member 5 (1158 aa).

At 1–729 the chain is on the cytoplasmic side; it reads MQTTQSSCPG…LTRWRKFWGA (729 aa). Ser-129 carries the phosphoserine; by PKC modification. Ca(2+)-binding residues include Cys-341, Asp-350, Asp-353, and Glu-354. The interval 488-507 is disordered; sequence GRRMEERGPPKRPAGQKWLP. Positions 552-572 form a coiled coil; that stretch reads KIIKEMSHLEKEAEVARTMRE. Residues 730–754 traverse the membrane as a helical segment; that stretch reads PVTVFLGNVVMYFAFLFLFTYVLLV. At 755-764 the chain is on the extracellular side; that stretch reads DFRPPPQGPS. Residues 765–784 traverse the membrane as a helical segment; the sequence is GSEVTLYFWVFTLVLEEIRQ. The Ca(2+) site is built by Glu-781 and Gln-784. Over 785 to 805 the chain is Cytoplasmic; it reads GFFTDEDTHLVKKFTLYVEDN. A helical membrane pass occupies residues 806–824; sequence WNKCDMVAIFLFIVGVTCR. Asn-807 and Asp-810 together coordinate Ca(2+). At 825-831 the chain is on the extracellular side; sequence MVPSVFE. The helical transmembrane segment at 832 to 854 threads the bilayer; that stretch reads AGRTVLAIDFMVFTLRLIHIFAI. Residues 855-863 are Cytoplasmic-facing; that stretch reads HKQLGPKII. Residues 864–893 form a helical membrane-spanning segment; it reads IVERMMKDVFFFLFFLSVWLVAYGVTTQAL. Residues 894-902 are Extracellular-facing; sequence LHPHDGRLE. Positions 903–938 form an intramembrane region, pore-forming; it reads WIFRRVLYRPYLQIFGQIPLDEIDEARVNCSLHPLL. A Selectivity filter motif is present at residues 917-919; the sequence is FGQ. Residues 939–950 are Extracellular-facing; it reads LESSASCPNLYA. The chain crosses the membrane as a helical span at residues 951–985; that stretch reads NWLVILLLVTFLLVTNVLLMNLLIAMFSYTFQVVQ. Over 986–1158 the chain is Cytoplasmic; that stretch reads GNADMFWKFQ…LESGLPPSDT (173 aa). Glu-1002 is a Ca(2+) binding site. A compositionally biased stretch (polar residues) spans 1127–1141; it reads TYSSSQNCGCRSQPA. The tract at residues 1127–1158 is disordered; the sequence is TYSSSQNCGCRSQPASARDREYLESGLPPSDT.

Belongs to the transient receptor (TC 1.A.4) family. LTrpC subfamily. TRPM5 sub-subfamily. In terms of assembly, homotetramer. Post-translationally, multiple phosphorylation sites regulate the Gq/ TRPM5 modulation axis, with the Ser-129 playing a substantial role in this positive modulation. As to expression, strongly expressed in liver, heart, testis, brain and kidney. Detected in fetal liver, kidney, spleen, brain, heart and lung, and in adult skin, eyes, spleen, stomach, small intestine, colon, lung, bladder, pancreas and thymus. Biallelically expressed at all stages and tissues examined. Also expressed in subsets of taste receptor cells of the tongue, in olfactory sensory neurons of the main olfactory epithelium and in the vomeronasal organ.

Its subcellular location is the cell membrane. It catalyses the reaction Na(+)(in) = Na(+)(out). It carries out the reaction K(+)(in) = K(+)(out). With respect to regulation, ca(2+)-activated cation channel. Displays voltage dependence modulation. Regulated by PI(4,5)P2 levels. PI(4,5)P 2 reverses the Ca(2+) -induced desensitization of channels. Inhibited by flufenamic acid with an IC(50) of 24.5 uM and spermine with an IC(50) of 37 uM. Is a highly temperature-sensitive, heat activated channel showing a steep increase of inward currents at temperatures between 15 and 35 degrees Celsius. Heat activation is due to a shift of the voltage-dependent activation curve to negative potentials. The channel is blocked by extracellular acidification. Functionally, monovalent cation-selective ion channel activated by intracellular Ca(2+) in a voltage- and temperature-dependent manner. Mediates the transport of Na(+), K(+) and Cs(+) ions equally well. Activated directly by increase in intracellular Ca(2+), but is impermeable to it. The activation mechanism of TRPM5 involves a multistep process. TRPM5 activation involves ligand binding (i.e., tastant molecule, glucose stimulation) to Gq/G-protein coupled receptors (GPCR) and leads to the breakdown of phosphatidylinositol bisphosphate (PIP2) into diacylglycerol (DAG) and inositol trisphosphate (IP3), IP3 binds to its receptors in the endoplasmic reticulum and cause Ca(2+) release. Simultaneously with the intracellular Ca(2+) release, DAG activates the protein kinase C (PKC), which phosphorylates the TRPM5 channel. This phosphorylation combined with the bound Ca(2+), leads to a robust inward current allowing the entry of sodium ions (Na+) into the cell. This ion influx depolarizes the cell membrane, generating action potentials that propagate TRPM5 signals. Is a key player in sensing sweet, umami and bitter stimuli. May also be involved in sensing semiochemicals. Involved in insulin secretion by pancreatic beta cells. This is Transient receptor potential cation channel subfamily M member 5 from Mus musculus (Mouse).